Reading from the N-terminus, the 351-residue chain is Putative aminodehydroquinate synthase (351 aa).

NAD(+) is bound by residues 65-68 (EPTK), 97-101 (GTTTD), 121-122 (TS), Lys134, Lys143, and 161-164 (YLTT). The Zn(2+) site is built by Glu176, His225, and His241.

Belongs to the sugar phosphate cyclases superfamily. aDHQS family. It depends on NAD(+) as a cofactor. Requires Co(2+) as cofactor. The cofactor is Zn(2+).

In terms of biological role, may catalyze the conversion of 3,4-dideoxy-4-amino-D-arabino-heptulosonate 7-phosphate (aDAHP) to 5-deoxy-5-amino-3-dehydroquinate (aDHQ). Probably involved in the formation of 3-amino-5-hydroxybenzoic acid (AHBA), the precursor of rifamycin and related ansamycins. This is Putative aminodehydroquinate synthase from Amycolatopsis mediterranei (strain S699) (Nocardia mediterranei).